The sequence spans 343 residues: Ribosomal RNA small subunit methyltransferase H (343 aa).

Residues A39–H41, D58, F87, D108, and Q115 each bind S-adenosyl-L-methionine.

The protein belongs to the methyltransferase superfamily. RsmH family.

It is found in the cytoplasm. It carries out the reaction cytidine(1402) in 16S rRNA + S-adenosyl-L-methionine = N(4)-methylcytidine(1402) in 16S rRNA + S-adenosyl-L-homocysteine + H(+). Its function is as follows. Specifically methylates the N4 position of cytidine in position 1402 (C1402) of 16S rRNA. The polypeptide is Ribosomal RNA small subunit methyltransferase H (Bifidobacterium adolescentis (strain ATCC 15703 / DSM 20083 / NCTC 11814 / E194a)).